We begin with the raw amino-acid sequence, 306 residues long: MTYKMKKEYAFWATVCLLLSLVPEFLNALSEEADDTDSELGSMKPLHTFCAMKADDGPCKAMIRSYFFNMYTHQCEEFIYGGCEGNENRFDTLEECKKTCIPGYEKTAVKAASGAERPDFCFLEEDPGLCRGYMKRYLYNNQTKQCERFVYGGCLGNRNNFETLDECKKICENPVHSPSPVNEVQMSDYVTDGNTVTDRSTVNNIVVPQSPKVPRRRDYRGRPWCLQPADSGLCKASERRFYYNSATGKCHRFNYTGCGGNNNNFTTRRRCLRSCKTGLIKNKSKGVVKIQRRKAPFVKVVYESIN.

An N-terminal signal peptide occupies residues 1–28; the sequence is MTYKMKKEYAFWATVCLLLSLVPEFLNA. BPTI/Kunitz inhibitor domains follow at residues 50–100, 121–171, and 225–275; these read CAMK…KKTC, CFLE…KKIC, and CLQP…LRSC. Intrachain disulfides connect Cys50–Cys100, Cys59–Cys83, Cys75–Cys96, Cys121–Cys171, Cys130–Cys154, Cys146–Cys167, Cys225–Cys275, Cys234–Cys258, and Cys250–Cys271. Residue Asn141 is glycosylated (N-linked (GlcNAc...) asparagine). N-linked (GlcNAc...) asparagine glycans are attached at residues Asn254, Asn264, and Asn282.

In terms of tissue distribution, isoform alpha is expressed in heart and spleen; isoform beta in heart and lung.

Its subcellular location is the secreted. Functionally, inhibits factor X (X(a)) directly and, in a Xa-dependent way, inhibits VIIa/tissue factor activity, presumably by forming a quaternary Xa/LACI/VIIa/TF complex. It possesses an antithrombotic action and also the ability to associate with lipoproteins in plasma. The sequence is that of Tissue factor pathway inhibitor (Tfpi) from Mus musculus (Mouse).